A 120-amino-acid polypeptide reads, in one-letter code: Ribosome-binding factor A (120 aa).

It belongs to the RbfA family. Monomer. Binds 30S ribosomal subunits, but not 50S ribosomal subunits or 70S ribosomes.

It is found in the cytoplasm. Functionally, one of several proteins that assist in the late maturation steps of the functional core of the 30S ribosomal subunit. Associates with free 30S ribosomal subunits (but not with 30S subunits that are part of 70S ribosomes or polysomes). Required for efficient processing of 16S rRNA. May interact with the 5'-terminal helix region of 16S rRNA. The polypeptide is Ribosome-binding factor A (Rickettsia felis (strain ATCC VR-1525 / URRWXCal2) (Rickettsia azadi)).